The chain runs to 285 residues: Ubiquinone biosynthesis protein COQ4, mitochondrial (285 aa).

The transit peptide at 1 to 11 (MPPAVRQGMRT) directs the protein to the mitochondrion. His166, Asp167, His170, and Glu182 together coordinate Zn(2+).

It belongs to the COQ4 family. Component of a multi-subunit COQ enzyme complex, composed of at least COQ3, COQ4, COQ5, COQ6, COQ7 and COQ9. It depends on Zn(2+) as a cofactor.

Its subcellular location is the mitochondrion inner membrane. The enzyme catalyses a 4-hydroxy-3-methoxy-5-(all-trans-polyprenyl)benzoate + H(+) = a 2-methoxy-6-(all-trans-polyprenyl)phenol + CO2. It participates in cofactor biosynthesis; ubiquinone biosynthesis. In terms of biological role, lyase that catalyzes the C1-decarboxylation of 4-hydroxy-3-methoxy-5-(all-trans-polyprenyl)benzoic acid into 2-methoxy-6-(all-trans-polyprenyl)phenol during ubiquinone biosynthesis. The polypeptide is Ubiquinone biosynthesis protein COQ4, mitochondrial (Paracoccidioides lutzii (strain ATCC MYA-826 / Pb01) (Paracoccidioides brasiliensis)).